Reading from the N-terminus, the 501-residue chain is GTPase Obg (501 aa).

One can recognise an Obg domain in the interval 2-159; that stretch reads NRFIDRVVLH…HDLILELKSM (158 aa). The OBG-type G domain occupies 160–341; it reads ADVGLVGFPS…LKYKLLEIVQ (182 aa). GTP is bound by residues 166–173, 191–195, 212–215, 292–295, and 322–324; these read GFPSAGKS, FTTLQ, DVPG, NKAD, and SAV. Mg(2+)-binding residues include Ser-173 and Thr-193. In terms of domain architecture, OCT spans 362–442; it reads VDHRTKGQFQ…IGGISFEWEP (81 aa).

It belongs to the TRAFAC class OBG-HflX-like GTPase superfamily. OBG GTPase family. As to quaternary structure, monomer. Mg(2+) serves as cofactor.

Its subcellular location is the cytoplasm. Its function is as follows. An essential GTPase which binds GTP, GDP and possibly (p)ppGpp with moderate affinity, with high nucleotide exchange rates and a fairly low GTP hydrolysis rate. Plays a role in control of the cell cycle, stress response, ribosome biogenesis and in those bacteria that undergo differentiation, in morphogenesis control. This Corynebacterium glutamicum (strain R) protein is GTPase Obg.